A 409-amino-acid polypeptide reads, in one-letter code: F-box/kelch-repeat protein At1g48625 (409 aa).

One can recognise an F-box domain in the interval 2-49 (ATMISNLPRDLMEEILSRVPLKSMRAVRLTCKNWHTLSITISESLAKM). 2 Kelch repeats span residues 169–218 (FIDY…LKGN) and 221–266 (WCAR…ILSC).

This chain is F-box/kelch-repeat protein At1g48625, found in Arabidopsis thaliana (Mouse-ear cress).